Reading from the N-terminus, the 305-residue chain is MKHPNTIDIKALQSSFQIIGLLGKPRHDVTLQMHKNLFQWLLEKGYQVLVERPIGEQLGLSENYLASVDEIGQQAQLAIVIGGDGNVLGRARTLAKYDIALIGINRGNLGFLTDIDPKNAYSQLQACLEDGDCFVEERFILEASVERNGKIIARGNAVNEAVVHPAKIAHMIDFHVYINDKFAFSQRSDGLIISTPTGSTAYSLSAGGPILTPQLNAIALVPMFPHTLSSRPLVIDGDSKISIRFAEYNTSQLEVGCDSQVALEFSPDDIVHIQKSPDKLRLLHLKNYNYYKVLSSKLGWLRNSV.

Residue Asp84 is the Proton acceptor of the active site. NAD(+)-binding positions include 84-85, 159-160, His170, Arg187, Asp189, 200-205, and Gln260; these read DG, NE, and TAYSLS.

The protein belongs to the NAD kinase family. The cofactor is a divalent metal cation.

The protein resides in the cytoplasm. The catalysed reaction is NAD(+) + ATP = ADP + NADP(+) + H(+). Its function is as follows. Involved in the regulation of the intracellular balance of NAD and NADP, and is a key enzyme in the biosynthesis of NADP. Catalyzes specifically the phosphorylation on 2'-hydroxyl of the adenosine moiety of NAD to yield NADP. In Pasteurella multocida (strain Pm70), this protein is NAD kinase.